A 357-amino-acid chain; its full sequence is Tetraacyldisaccharide 4'-kinase (357 aa).

Residue 49 to 56 (TIGGTGKT) participates in ATP binding.

This sequence belongs to the LpxK family.

The enzyme catalyses a lipid A disaccharide + ATP = a lipid IVA + ADP + H(+). Its pathway is glycolipid biosynthesis; lipid IV(A) biosynthesis; lipid IV(A) from (3R)-3-hydroxytetradecanoyl-[acyl-carrier-protein] and UDP-N-acetyl-alpha-D-glucosamine: step 6/6. Its function is as follows. Transfers the gamma-phosphate of ATP to the 4'-position of a tetraacyldisaccharide 1-phosphate intermediate (termed DS-1-P) to form tetraacyldisaccharide 1,4'-bis-phosphate (lipid IVA). The sequence is that of Tetraacyldisaccharide 4'-kinase from Porphyromonas gingivalis (strain ATCC 33277 / DSM 20709 / CIP 103683 / JCM 12257 / NCTC 11834 / 2561).